The sequence spans 358 residues: uncharacterized protein (358 aa).

Belongs to the SMP-30/CGR1 family.

This is an uncharacterized protein from Saccharomyces cerevisiae (strain ATCC 204508 / S288c) (Baker's yeast).